The following is a 219-amino-acid chain: Large ribosomal subunit protein uL3 (219 aa).

The disordered stretch occupies residues 133 to 153 (GRASHGNSRSHNVPGSIGMAQ). At Gln-153 the chain carries N5-methylglutamine.

It belongs to the universal ribosomal protein uL3 family. In terms of assembly, part of the 50S ribosomal subunit. Forms a cluster with proteins L14 and L19. In terms of processing, methylated by PrmB.

Functionally, one of the primary rRNA binding proteins, it binds directly near the 3'-end of the 23S rRNA, where it nucleates assembly of the 50S subunit. The polypeptide is Large ribosomal subunit protein uL3 (Burkholderia mallei (strain NCTC 10247)).